A 122-amino-acid chain; its full sequence is Diacylglycerol kinase (122 aa).

Residues Arg10 and Tyr17 each coordinate ATP. Substrate is bound by residues Arg10, 14 to 19 (AAGYSW), and 23 to 26 (RAAW). Glu29 lines the ATP pocket. Glu29 contacts a divalent metal cation. Residues 31-35 (AFRQE), 48-51 (WLDV), Arg56, and Glu70 each bind substrate. Residues 35–55 (EGVAVLLAVVIACWLDVDAIT) traverse the membrane as a helical segment. A helical transmembrane segment spans residues 57-77 (VLLISSVMLVMIVEILNSAIE). Glu70 serves as the catalytic Proton acceptor. Residues Glu77, 86–88 (EYH), and 95–96 (KD) contribute to the ATP site. A divalent metal cation is bound at residue Glu77. Residues 98–118 (GSAAVLIAIIVAVITWCILLW) form a helical membrane-spanning segment. Residues Ser99 and 113–118 (WCILLW) each bind substrate.

This sequence belongs to the bacterial diacylglycerol kinase family. It depends on Mg(2+) as a cofactor.

The protein resides in the cell inner membrane. The catalysed reaction is a 1,2-diacyl-sn-glycerol + ATP = a 1,2-diacyl-sn-glycero-3-phosphate + ADP + H(+). In terms of biological role, catalyzes the ATP-dependent phosphorylation of sn-l,2-diacylglycerol (DAG) to phosphatidic acid. Involved in the recycling of diacylglycerol produced as a by-product during membrane-derived oligosaccharide (MDO) biosynthesis. This Shigella flexneri protein is Diacylglycerol kinase (dgkA).